The following is a 467-amino-acid chain: Serine/threonine-protein kinase SSN3 (467 aa).

Polar residues-rich tracts occupy residues M1–R12 and G29–S39. The disordered stretch occupies residues M1–N45. One can recognise a Protein kinase domain in the interval Y79–F408. ATP contacts are provided by residues I85–V93 and K109. D211 serves as the catalytic Proton acceptor. The segment at Y426–M467 is disordered.

It belongs to the protein kinase superfamily. CMGC Ser/Thr protein kinase family. CDC2/CDKX subfamily. Component of the SRB8-11 complex, a regulatory module of the Mediator complex. Mg(2+) serves as cofactor.

It localises to the nucleus. It catalyses the reaction L-seryl-[protein] + ATP = O-phospho-L-seryl-[protein] + ADP + H(+). The enzyme catalyses L-threonyl-[protein] + ATP = O-phospho-L-threonyl-[protein] + ADP + H(+). It carries out the reaction [DNA-directed RNA polymerase] + ATP = phospho-[DNA-directed RNA polymerase] + ADP + H(+). In terms of biological role, component of the SRB8-11 complex. The SRB8-11 complex is a regulatory module of the Mediator complex which is itself involved in regulation of basal and activated RNA polymerase II-dependent transcription. The SRB8-11 complex may be involved in the transcriptional repression of a subset of genes regulated by Mediator. It may inhibit the association of the Mediator complex with RNA polymerase II to form the holoenzyme complex. The SRB8-11 complex phosphorylates the C-terminal domain (CTD) of the largest subunit of RNA polymerase II. The polypeptide is Serine/threonine-protein kinase SSN3 (SSN3) (Coccidioides immitis (strain RS) (Valley fever fungus)).